We begin with the raw amino-acid sequence, 748 residues long: tRNA endonuclease ANKZF1 (748 aa).

The C2H2-type zinc-finger motif lies at 96–120; that stretch reads LFCSACDQIFQNHQEQREHYKLDWH. Residues 135–185 form a disordered region; it reads SASDFEQQSSTGDLSSISGSDDTDSSSEEDLLPLDEGRAESEKPNRPPGFY. A compositionally biased stretch (low complexity) spans 143–154; it reads SSTGDLSSISGS. A compositionally biased stretch (acidic residues) spans 155 to 167; it reads DDTDSSSEEDLLP. Basic and acidic residues predominate over residues 169–179; the sequence is DEGRAESEKPN. In terms of domain architecture, VLRF1 spans 227–370; sequence GPRYYVVLMA…QRVLHKLTTL (144 aa). Residue Gln-270 is part of the active site. 2 positions are modified to phosphoserine: Ser-282 and Ser-385. Positions 383-408 are enriched in basic and acidic residues; that stretch reads FHSPETHWKPVREERKKDTEKEKTKV. Disordered stretches follow at residues 383–438 and 460–497; these read FHSP…SEVE and RRRR…TQEV. Over residues 429 to 438 the composition is skewed to acidic residues; sequence SQEEDGSEVE. Polar residues predominate over residues 484 to 497; sequence QPQDEPFSQPTQEV. An ANK 1 repeat occupies 515-545; sequence ELWDTLLAACRAGEVEVLKLQLATGLVDPGV. Ser-555 is modified (phosphoserine). The ANK 2 repeat unit spans residues 556-585; that stretch reads GGFTLLHAAAAAGRGLVVRLLLEAGADPTV. Positions 621-677 are disordered; sequence KARVPGPLTQEMEARQATRKKEQKAARRQREQQQRKQREQEEQEQEEQRRFAALSDR. Residues 628–681 adopt a coiled-coil conformation; that stretch reads LTQEMEARQATRKKEQKAARRQREQQQRKQREQEEQEQEEQRRFAALSDREKRA. A Phosphothreonine modification is found at Thr-629. Residues 632-677 are compositionally biased toward basic and acidic residues; it reads MEARQATRKKEQKAARRQREQQQRKQREQEEQEQEEQRRFAALSDR. A VCP/p97-interacting motif (VIM) region spans residues 654 to 666; the sequence is QRKQREQEEQEQE. Ser-702 carries the phosphoserine modification.

Belongs to the ANKZF1/VMS1 family. As to quaternary structure, interacts (via VIM motif) with VCP.

Its subcellular location is the cytoplasm. In terms of biological role, endonuclease that cleaves polypeptidyl-tRNAs downstream of the ribosome-associated quality control (RQC) pathway to release incompletely synthesized polypeptides for degradation. The RQC pathway disassembles aberrantly stalled translation complexes to recycle or degrade the constituent parts. ANKZF1 acts downstream disassembly of stalled ribosomes and specifically cleaves off the terminal 3'-CCA nucleotides universal to all tRNAs from polypeptidyl-tRNAs, releasing (1) ubiquitinated polypeptides from 60S ribosomal subunit for degradation and (2) cleaved tRNAs. ANKZF1-cleaved tRNAs are then repaired and recycled by ELAC1 and TRNT1. Also plays a role in the cellular response to hydrogen peroxide and in the maintenance of mitochondrial integrity under conditions of cellular stress. The chain is tRNA endonuclease ANKZF1 from Mus musculus (Mouse).